A 417-amino-acid polypeptide reads, in one-letter code: Gelsolin (417 aa).

Residues 93 to 171 (KVPVLESHYG…VVQGKEPAHL (79 aa)) form a Gelsolin-like 4 repeat. Residues Gly107, Asp108, Glu138, Asp150, Gly155, Pro157, Thr187, Asn227, Asp228, Glu250, Asp331, Asp332, and Glu354 each contribute to the Ca(2+) site. Gelsolin-like repeat units lie at residues 213–261 (RAVE…LKIL) and 316–392 (IEEV…PTFI).

The protein belongs to the villin/gelsolin family.

The protein localises to the cytoplasm. It localises to the cytoskeleton. Functionally, calcium-regulated, actin-modulating protein that binds to the plus (or barbed) ends of actin monomers or filaments, preventing monomer exchange (end-blocking or capping). It can promote the assembly of monomers into filaments (nucleation) as well as sever filaments already formed. Plays a role in ciliogenesis. This chain is Gelsolin (gsn), found in Xenopus laevis (African clawed frog).